The following is a 247-amino-acid chain: MATTPLLLLLLTAVFLSTEITAQRAAPAPGPAGPINITAILEKGGQFVTLIRLLNTTQIGNQINIQINSSSEGMTVLAPTDNAFQNLKPGTLNKLSPDDQVKLILYHVSPKFYTLEDLLSVSNPVRTQASGRDVGGVYGLNFTGQGNQVNVSTGVVETRLSTSLRQERPLAVYVVDMVLLPEEMFGERKISPMAPPPKSKSPDVSDDSESSKKAAAPSESEKSGSGEMNTGLGLGLGLVVLCLKFLL.

The N-terminal stretch at 1 to 25 (MATTPLLLLLLTAVFLSTEITAQRA) is a signal peptide. In terms of domain architecture, FAS1 spans 34–179 (PINITAILEK…LAVYVVDMVL (146 aa)). 5 N-linked (GlcNAc...) asparagine glycosylation sites follow: N36, N55, N68, N141, and N150. Residues 189 to 228 (KISPMAPPPKSKSPDVSDDSESSKKAAAPSESEKSGSGEM) form a disordered region. A lipid anchor (GPI-anchor amidated glycine) is attached at G224. A propeptide spans 225–247 (SGEMNTGLGLGLGLVVLCLKFLL) (removed in mature form).

This sequence belongs to the fasciclin-like AGP family.

The protein localises to the cell membrane. In terms of biological role, may be a cell surface adhesion protein. The protein is Fasciclin-like arabinogalactan protein 13 (FLA13) of Arabidopsis thaliana (Mouse-ear cress).